The chain runs to 92 residues: Small ribosomal subunit protein bS6 (92 aa).

Belongs to the bacterial ribosomal protein bS6 family.

Functionally, binds together with bS18 to 16S ribosomal RNA. This is Small ribosomal subunit protein bS6 from Clostridioides difficile (strain 630) (Peptoclostridium difficile).